The sequence spans 171 residues: Large ribosomal subunit protein uL10 (171 aa).

The protein belongs to the universal ribosomal protein uL10 family. Part of the ribosomal stalk of the 50S ribosomal subunit. The N-terminus interacts with L11 and the large rRNA to form the base of the stalk. The C-terminus forms an elongated spine to which L12 dimers bind in a sequential fashion forming a multimeric L10(L12)X complex.

Functionally, forms part of the ribosomal stalk, playing a central role in the interaction of the ribosome with GTP-bound translation factors. This Hyphomonas neptunium (strain ATCC 15444) protein is Large ribosomal subunit protein uL10.